A 73-amino-acid chain; its full sequence is Translational regulator CsrA (73 aa).

Belongs to the CsrA/RsmA family. Homodimer; the beta-strands of each monomer intercalate to form a hydrophobic core, while the alpha-helices form wings that extend away from the core.

Its subcellular location is the cytoplasm. Its function is as follows. A translational regulator that binds mRNA to regulate translation initiation and/or mRNA stability. Usually binds in the 5'-UTR at or near the Shine-Dalgarno sequence preventing ribosome-binding, thus repressing translation. Its main target seems to be the major flagellin gene, while its function is anatagonized by FliW. The sequence is that of Translational regulator CsrA from Clostridium acetobutylicum (strain ATCC 824 / DSM 792 / JCM 1419 / IAM 19013 / LMG 5710 / NBRC 13948 / NRRL B-527 / VKM B-1787 / 2291 / W).